The following is a 312-amino-acid chain: HPr kinase/phosphorylase (312 aa).

Catalysis depends on residues His-139 and Lys-160. ATP is bound at residue 154 to 161 (GDSGIGKS). Residue Ser-161 coordinates Mg(2+). Asp-178 acts as the Proton acceptor; for phosphorylation activity. Proton donor; for dephosphorylation activity in catalysis. The segment at 202–211 (IEIRGVGIID) is important for the catalytic mechanism of both phosphorylation and dephosphorylation. Glu-203 provides a ligand contact to Mg(2+). The active site involves Arg-244. The important for the catalytic mechanism of dephosphorylation stretch occupies residues 265 to 270 (PVKTGR).

This sequence belongs to the HPrK/P family. As to quaternary structure, homohexamer. The cofactor is Mg(2+).

It carries out the reaction [HPr protein]-L-serine + ATP = [HPr protein]-O-phospho-L-serine + ADP + H(+). The enzyme catalyses [HPr protein]-O-phospho-L-serine + phosphate + H(+) = [HPr protein]-L-serine + diphosphate. Its function is as follows. Catalyzes the ATP- as well as the pyrophosphate-dependent phosphorylation of a specific serine residue in HPr, a phosphocarrier protein of the phosphoenolpyruvate-dependent sugar phosphotransferase system (PTS). HprK/P also catalyzes the pyrophosphate-producing, inorganic phosphate-dependent dephosphorylation (phosphorolysis) of seryl-phosphorylated HPr (P-Ser-HPr). The two antagonistic activities of HprK/P are regulated by several intracellular metabolites, which change their concentration in response to the absence or presence of rapidly metabolisable carbon sources (glucose, fructose, etc.) in the growth medium. Therefore, by controlling the phosphorylation state of HPr, HPrK/P is a sensor enzyme that plays a major role in the regulation of carbon metabolism and sugar transport: it mediates carbon catabolite repression (CCR), and regulates PTS-catalyzed carbohydrate uptake and inducer exclusion. In Streptococcus pneumoniae serotype 4 (strain ATCC BAA-334 / TIGR4), this protein is HPr kinase/phosphorylase.